The chain runs to 546 residues: MGKNLTIVMLVFVSMAGWMFGADTGSIGGITNMRDFQSRFADRYNPVTDSYSYSSARQGLITGMVNVGSFFGCFLSSPLMDRIGKRTSIMFWTIVYLIGIILQVTAVPSWVQIMVAKIWTGLSIGALSVLAPGFQSEVAPADLRGTIVTTYQLAVTGGIFIAACINMGTHKLHKTAQWRVSMGINLLWGIITFIGISFLPESPRYLISVGRDEEALQIMAKNNDLPIEHEVIQTEYHVIKSDCEAELAGGPATWPEIFGPDIRYRTFLGLGVMSLQQLTGDNYYFYYGFEVFEGTGMNSPYLSALILDAVNFGCTFGGLFVLEFFGRRMPLIIGALWQSITFFIYAAVGNRALTRKNGTSNHRAGAVMIVFSCLFIFSFAQTWGPAAYVIVGESYPIRYRSKCAAVATTGNWLWGFLISFFTPFITNSIGFKYGYIFAACNLCAACIIFLFAHETKGLTLEEINELYISGAKPWMPRPKNLGNFTKQQEEVREKSRGVQGESAAHLENVDGEEGIEDSSNDISSTTSSDGRAKPESSYHDQEEQFA.

Over 1–9 (MGKNLTIVM) the chain is Cytoplasmic. Residues 10 to 30 (LVFVSMAGWMFGADTGSIGGI) traverse the membrane as a helical segment. The Extracellular portion of the chain corresponds to 31-58 (TNMRDFQSRFADRYNPVTDSYSYSSARQ). The helical transmembrane segment at 59–79 (GLITGMVNVGSFFGCFLSSPL) threads the bilayer. Residues 80–87 (MDRIGKRT) are Cytoplasmic-facing. A helical transmembrane segment spans residues 88–108 (SIMFWTIVYLIGIILQVTAVP). At 109-112 (SWVQ) the chain is on the extracellular side. Residues 113-133 (IMVAKIWTGLSIGALSVLAPG) form a helical membrane-spanning segment. At 134–144 (FQSEVAPADLR) the chain is on the cytoplasmic side. A helical membrane pass occupies residues 145–165 (GTIVTTYQLAVTGGIFIAACI). At 166–179 (NMGTHKLHKTAQWR) the chain is on the extracellular side. A helical membrane pass occupies residues 180 to 200 (VSMGINLLWGIITFIGISFLP). Topologically, residues 201–266 (ESPRYLISVG…IFGPDIRYRT (66 aa)) are cytoplasmic. The helical transmembrane segment at 267-285 (FLGLGVMSLQQLTGDNYYF) threads the bilayer. Residues 286–301 (YYGFEVFEGTGMNSPY) are Extracellular-facing. A helical membrane pass occupies residues 302-322 (LSALILDAVNFGCTFGGLFVL). The Cytoplasmic portion of the chain corresponds to 323 to 328 (EFFGRR). The helical transmembrane segment at 329–349 (MPLIIGALWQSITFFIYAAVG) threads the bilayer. Topologically, residues 350-363 (NRALTRKNGTSNHR) are extracellular. Asn357 is a glycosylation site (N-linked (GlcNAc...) asparagine). Residues 364 to 384 (AGAVMIVFSCLFIFSFAQTWG) traverse the membrane as a helical segment. Over 385 to 404 (PAAYVIVGESYPIRYRSKCA) the chain is Cytoplasmic. The helical transmembrane segment at 405–425 (AVATTGNWLWGFLISFFTPFI) threads the bilayer. The Extracellular segment spans residues 426–432 (TNSIGFK). The helical transmembrane segment at 433–453 (YGYIFAACNLCAACIIFLFAH) threads the bilayer. The Cytoplasmic portion of the chain corresponds to 454-546 (ETKGLTLEEI…SYHDQEEQFA (93 aa)). The tract at residues 486 to 546 (KQQEEVREKS…SYHDQEEQFA (61 aa)) is disordered. A compositionally biased stretch (basic and acidic residues) spans 487–496 (QQEEVREKSR). A compositionally biased stretch (acidic residues) spans 509-519 (VDGEEGIEDSS). The segment covering 520–529 (NDISSTTSSD) has biased composition (low complexity). Phosphoserine is present on residues Ser528 and Ser537. Positions 530-546 (GRAKPESSYHDQEEQFA) are enriched in basic and acidic residues.

The protein belongs to the major facilitator superfamily. Sugar transporter (TC 2.A.1.1) family.

The protein localises to the membrane. High-affinity glucose transporter. This is High-affinity glucose transporter ght5 (ght5) from Schizosaccharomyces pombe (strain 972 / ATCC 24843) (Fission yeast).